We begin with the raw amino-acid sequence, 92 residues long: Small ribosomal subunit protein uS19c (92 aa).

This sequence belongs to the universal ribosomal protein uS19 family.

The protein localises to the plastid. Its subcellular location is the chloroplast. In terms of biological role, protein S19 forms a complex with S13 that binds strongly to the 16S ribosomal RNA. This is Small ribosomal subunit protein uS19c from Nephroselmis olivacea (Green alga).